The following is a 2541-amino-acid chain: Talin-1 (2541 aa).

The FERM domain occupies 86-403 (RPLKIRMLDG…GYIDIILKKK (318 aa)). The residue at position 167 (T167) is a Phosphothreonine. Positions 280-435 (FQAHKNCGQM…PKKSTVLQQQ (156 aa)) are interaction with LAYN. Phosphoserine occurs at positions 405, 425, 446, 620, and 729. Residues 482–655 (RGHMPPLTSA…QASGELLQQI (174 aa)) are helical bundle R1. The segment at 656-786 (GESDTDPHFQ…ALNELLQHVK (131 aa)) is helical bundle R2. A helical bundle R3 region spans residues 787–911 (AHATGAGPAG…NAAAQNAIKK (125 aa)). The tract at residues 913 to 1044 (LVQRLEHAAK…RTAAQKAQEA (132 aa)) is helical bundle R4. At S1021 the chain carries Phosphoserine. The helical bundle R5 stretch occupies residues 1046–1206 (GPLEMDSALS…NRCVSCLPGQ (161 aa)). Y1116 carries the post-translational modification Phosphotyrosine. The residue at position 1142 (T1142) is a Phosphothreonine. Phosphoserine is present on residues S1201 and S1225. The segment at 1207–1357 (RDVDNALRAV…QLITMCTQQA (151 aa)) is helical bundle R6. Position 1263 is a phosphothreonine (T1263). Phosphoserine is present on S1323. The tract at residues 1327-1948 (AAPNLKSQLA…CSPSDAYTKK (622 aa)) is interaction with SYNM. Residues 1358 to 1453 (PGQKECDNAL…AYLVGVSDPN (96 aa)) form a helical bundle R7A region. The tract at residues 1359 to 1659 (GQKECDNALR…SMRDKAPGQL (301 aa)) is interaction with VCL and F-actin. Positions 1461 to 1580 (LVEPTQFARA…NLSAFASNPE (120 aa)) are helical bundle R8. K1544 is modified (N6-acetyllysine). The segment at 1581-1653 (FSSIPAQISP…IKKLITSMRD (73 aa)) is helical bundle R7B. Residues 1655 to 1822 (APGQLECETA…TLNEAASAAG (168 aa)) form a helical bundle R9 region. The tract at residues 1823–1973 (VVGGMVDSIT…VLAALQAGNR (151 aa)) is helical bundle R10. S1849 is subject to Phosphoserine. Position 1855 is a phosphothreonine (T1855). S1878 carries the phosphoserine modification. The interval 1974–2140 (GTQACITAAS…TVKAVEDEAT (167 aa)) is helical bundle R11. Residue K2031 is modified to N6-acetyllysine. S2040 carries the post-translational modification Phosphoserine. N6-acetyllysine is present on K2115. The interval 2141–2294 (KGTRALEATT…QAAEAMKGTE (154 aa)) is helical bundle R12. The region spanning 2293–2533 (TEWVDPEDPT…QIRQQQYKFL (241 aa)) is the I/LWEQ domain. Residues 2300–2482 (DPTVIAENEL…AAQKAAAFEE (183 aa)) form a helical bundle R13 region.

Part of a complex composed of THSD1, PTK2/FAK1, TLN1 and VCL. Interacts with THSD1; this promotes interaction with PTK2/FAK1 and VCL. Binds with high affinity to VCL and with low affinity to integrins. Interacts with APBB1IP; this inhibits VCL binding. Interacts with PTK2/FAK1. Interacts with PIP5K1C and NRAP. Interacts with LAYN. Interacts with SYNM. Interacts with ITGB1; the interaction is prevented by competitive binding of ITGB1BP1. Interacts with SVEP1. Interacts (via R7 domain) with KANK1 or KANK2 (via KN motif); this interaction likely initiates the assembly of cortical microtubule stabilization complexes (CMSCs) at the vicinity of focal adhesions. In terms of assembly, interacts with VCL; shows reduced VCL binding compared to isoform 2. Interacts with APBB1IP; shows similar level of binding compared to isoform 2. As to quaternary structure, interacts with VCL; shows enhanced VCL binding compared to isoform 1. Interacts with APBB1IP; shows similar level of binding compared to isoform 1. (Microbial infection) Interacts with human cytomegalovirus protein UL135. Expressed at low to non-detectable levels in many tissues but highly expressed in skin and pancreas with other tissues including kidney cortex, endocervix, testis, pituitary, liver, and spleen also showing robust expression.

The protein localises to the cell projection. It localises to the ruffle membrane. Its subcellular location is the cytoplasm. It is found in the cytoskeleton. The protein resides in the cell surface. The protein localises to the cell junction. It localises to the focal adhesion. High molecular weight cytoskeletal protein concentrated at regions of cell-matrix and cell-cell contacts. Involved in connections of major cytoskeletal structures to the plasma membrane. With KANK1 co-organize the assembly of cortical microtubule stabilizing complexes (CMSCs) positioned to control microtubule-actin crosstalk at focal adhesions (FAs) rims. This Homo sapiens (Human) protein is Talin-1 (TLN1).